The following is a 66-amino-acid chain: Large ribosomal subunit protein bL31 (66 aa).

4 residues coordinate Zn(2+): Cys-16, Cys-18, Cys-36, and Cys-39.

This sequence belongs to the bacterial ribosomal protein bL31 family. Type A subfamily. In terms of assembly, part of the 50S ribosomal subunit. The cofactor is Zn(2+).

Binds the 23S rRNA. The protein is Large ribosomal subunit protein bL31 of Geobacter metallireducens (strain ATCC 53774 / DSM 7210 / GS-15).